The following is a 153-amino-acid chain: UPF0235 protein C15orf40 (153 aa).

Residues 1–12 (MLRLRSGLRHLR) are compositionally biased toward basic residues. The tract at residues 1 to 55 (MLRLRSGLRHLRATPNTRGSARLLCAEMPKKAGATTKGKSQSKEPERPLPPLGPV) is disordered. The residue at position 116 (S116) is a Phosphoserine.

Belongs to the UPF0235 family.

This Homo sapiens (Human) protein is UPF0235 protein C15orf40 (C15orf40).